The primary structure comprises 154 residues: MIIKNLQEFYRLLIPNVPLIAIDYGNKKLGIALSNQERSIAMPLNTITEINKKIVITSLLNIIEKYKVCGVIIGLPIDMSGAVTEQTNIVMKFAEELAKSINLPIYLQDERLTTKAANNLLKSFGVKRKDRNNNDDAVAASMILETVLDSIKNI.

It belongs to the YqgF nuclease family.

The protein localises to the cytoplasm. Functionally, could be a nuclease involved in processing of the 5'-end of pre-16S rRNA. The protein is Putative pre-16S rRNA nuclease of Rickettsia conorii (strain ATCC VR-613 / Malish 7).